A 567-amino-acid polypeptide reads, in one-letter code: Frizzled-7 (567 aa).

An N-terminal signal peptide occupies residues 1-31 (MRPAAGEAGAGLRWLGLAALLAALLGTPCAA). The Extracellular segment spans residues 32–250 (AHHEDKAISV…EAEVRFARLW (219 aa)). One can recognise an FZ domain in the interval 42 to 161 (PDHGFCQPIS…HGAGEICVGQ (120 aa)). 5 cysteine pairs are disulfide-bonded: Cys-47–Cys-108, Cys-55–Cys-101, Cys-92–Cys-129, Cys-118–Cys-158, and Cys-122–Cys-146. The N-linked (GlcNAc...) asparagine glycan is linked to Asn-61. An N-linked (GlcNAc...) asparagine glycan is attached at Asn-162. A helical membrane pass occupies residues 251-271 (VGVWSVLCCASTLFTVLTYLV). Topologically, residues 272–282 (DMRRFSYPERP) are cytoplasmic. A helical membrane pass occupies residues 283–303 (IIFLSGCYFMVAVAYAAGFLL). Residues 304-330 (EERVVCLERFSEDGYRTVAQGTKKEGC) lie on the Extracellular side of the membrane. The chain crosses the membrane as a helical span at residues 331-351 (TILFMILYFFGMASSIWWVIL). The Cytoplasmic segment spans residues 352–373 (SLTWFLAAGMKWGHEAIEANSQ). Residues 374–394 (YFHLAAWAVPAVKTITILAMG) form a helical membrane-spanning segment. Topologically, residues 395–417 (QVDGDVLSGVCYVGIYSVDSLRG) are extracellular. A helical transmembrane segment spans residues 418–438 (FVLAPLFVYLFIGTSFLLAGF). The Cytoplasmic segment spans residues 439–464 (VSLFRIRTIMKHDGTKTEKLEKLMVR). The chain crosses the membrane as a helical span at residues 465 to 485 (IGVFSVLYTVPATIVVACYFY). The Extracellular portion of the chain corresponds to 486–521 (EQAFRSTWEKTWLLQTCKTYAVPCPSHFAPMSPDFT). The chain crosses the membrane as a helical span at residues 522–542 (VFMIKYLMTMIVGITTGFWIW). Residues 543 to 567 (SGKTLQSWRRFYHRLSTGSKGETAV) are Cytoplasmic-facing. A Lys-Thr-X-X-X-Trp motif, mediates interaction with the PDZ domain of Dvl family members motif is present at residues 545 to 550 (KTLQSW). A PDZ-binding motif is present at residues 565–567 (TAV).

Belongs to the G-protein coupled receptor Fz/Smo family. In terms of tissue distribution, expressed broadly in cranial ectoderm. Also expressed in the developing somites and in other cranial placodes, including the olfactory, lens, otic placodes (lateral half of the vesicle) and epibranchial placodes. Low level of expression in all the mesoderm derivatives in the limb buds.

It is found in the cell membrane. The protein localises to the endosome membrane. Its function is as follows. Receptor for Wnt proteins. Most of frizzled receptors are coupled to the beta-catenin canonical signaling pathway, which leads to the activation of disheveled proteins, inhibition of GSK-3 kinase, nuclear accumulation of beta-catenin and activation of Wnt target genes. A second signaling pathway involving PKC and calcium fluxes has been seen for some family members, but it is not yet clear if it represents a distinct pathway or if it can be integrated in the canonical pathway, as PKC seems to be required for Wnt-mediated inactivation of GSK-3 kinase. Both pathways seem to involve interactions with G-proteins. May be involved in transduction and intercellular transmission of polarity information during tissue morphogenesis and/or in differentiated tissues. The sequence is that of Frizzled-7 (FZD7) from Gallus gallus (Chicken).